The primary structure comprises 48 residues: Large ribosomal subunit protein uL14 (48 aa).

The protein belongs to the universal ribosomal protein uL14 family.

This Onchocerca volvulus protein is Large ribosomal subunit protein uL14 (RPL23).